The sequence spans 216 residues: Maintenance of carboxysome distribution protein A (216 aa).

Residues glycine 18, glycine 19, glycine 21, lysine 22, threonine 23, threonine 24, and glutamine 47 each contribute to the ATP site. Threonine 23 is a Mg(2+) binding site.

Belongs to the ParA family. McdA subfamily. As to quaternary structure, homodimerizes in the presence of ATP. Each subunit binds 1 ATP molecule; some residues cross the dimer interface to contact ATP in the other subunit. Forms a complex with McdB.

The protein resides in the cytoplasm. It is found in the nucleoid. It carries out the reaction ATP + H2O = ADP + phosphate + H(+). Functionally, mcdA and McdB together mediate carboxysome (Cb) spacing, size, ultrastructure and probably inheritance in the cell, together they prevent Cb aggregation. McdA is an ATPase that forms dynamic gradients on the nucleoid in response to adapter protein McdB, which associates with carboxysomes. The interplay between McdA gradients on the nucleoid and McdB-bound carboxysomes result in the equal spacing of Cbs along the cell length. Its function is as follows. Incorrect positioning (aggregation) of carboxysomes results in reduced CO(2) fixation by encapsulated ribulose-1,5-bisphosphate carboxylase (RuBisCO, cbbL/cbbS), which leads to slower growth. The polypeptide is Maintenance of carboxysome distribution protein A (Gloeobacter kilaueensis (strain ATCC BAA-2537 / CCAP 1431/1 / ULC 316 / JS1)).